Consider the following 187-residue polypeptide: Adenine phosphoribosyltransferase (187 aa).

This sequence belongs to the purine/pyrimidine phosphoribosyltransferase family. In terms of assembly, homodimer.

It localises to the cytoplasm. It catalyses the reaction AMP + diphosphate = 5-phospho-alpha-D-ribose 1-diphosphate + adenine. It functions in the pathway purine metabolism; AMP biosynthesis via salvage pathway; AMP from adenine: step 1/1. Catalyzes a salvage reaction resulting in the formation of AMP, that is energically less costly than de novo synthesis. The polypeptide is Adenine phosphoribosyltransferase (Burkholderia pseudomallei (strain 1106a)).